The chain runs to 766 residues: Phospholipid phosphatase-related protein type 4 (766 aa).

S37 is subject to Phosphoserine. The next 4 helical transmembrane spans lie at 68-88 (LPCF…SLYF), 120-140 (AIPF…TIMV), 179-199 (FVGV…IIQL), and 248-268 (SFPS…SMYF). N-linked (GlcNAc...) asparagine glycosylation is present at N269. 2 helical membrane-spanning segments follow: residues 277–297 (KLLK…CGLT) and 309–329 (VYCG…YAVG). S347 is subject to Phosphoserine. N363 carries an N-linked (GlcNAc...) asparagine glycan. The residue at position 386 (S386) is a Phosphoserine. N433 carries an N-linked (GlcNAc...) asparagine glycan. S439 is subject to Phosphoserine. Disordered stretches follow at residues 454–503 (SKNE…GNQY) and 510–529 (TVPG…IQSR). N-linked (GlcNAc...) asparagine glycosylation is present at N456. 2 positions are modified to phosphoserine: S462 and S474. 2 N-linked (GlcNAc...) asparagine glycosylation sites follow: N515 and N545. S608 carries the phosphoserine modification. Disordered stretches follow at residues 634-654 (PIIQ…KWKA), 672-705 (DSES…GITT), and 741-766 (PERS…PYKD). Positions 688–702 (RKRKHIDSNEHHHHG) are enriched in basic residues. Residues 743–752 (RSNSPENTRN) are compositionally biased toward polar residues.

It belongs to the PA-phosphatase related phosphoesterase family. In terms of processing, O-glycosylated. Probably at Ser-347. In terms of tissue distribution, specifically expressed in neurons (at protein level).

It localises to the postsynaptic density membrane. Functionally, postsynaptic density membrane protein that indirectly regulates glutamatergic synaptic transmission through lysophosphatidic acid (LPA)-mediated signaling pathways. Binds lysophosphatidic acid (LPA) and mediates its internalization into cells. Could act as receptor or a transporter of this lipid at the post-synaptic membrane. Modulates lysophosphatidic acid (LPA) activity in neuron axonal outgrowth during development by attenuating phospholipid-induced axon collapse. This is Phospholipid phosphatase-related protein type 4 from Rattus norvegicus (Rat).